The chain runs to 397 residues: MKKKTVDDVSFAGKRVLMRVDFNVPLKDGAVTDDIRIRGALPSIQKVLSDGGCVILMSHLGRPKGKPVAEMSLKPAADRLAELLGKPVQMAPDCIGDEVKNMAAAMKAGDVLMLENLRFHKEEEANDPEFAKSLASLGEVFVNDAFGTAHRAHASTEGVTNYVAESVAGYLIGKELTYLGEATANPVRPFVAILGGAKISGKIDVLENLLGKVDTVLVGGAMVFTFFKAQGYNIGKSLVEDDKLELAKSILEKAKTSGVKFLLPTDVVLADKFDQDANTKIATIDSIEDDWMGLDIGPETANCFREEVVNAKTVIWNGPMGVFEMEKFAKGTMAVAQALADATKQGAITVIGGGDSAAAIAVAGLEDSVTHVSTGGGASLEFLEGKELPGIAALSNA.

Substrate is bound by residues 21 to 23 (DFN), Arg-36, 59 to 62 (HLGR), Arg-118, and Arg-151. Residues Lys-202, Gly-293, Glu-324, and 353 to 356 (GGDS) contribute to the ATP site.

The protein belongs to the phosphoglycerate kinase family. As to quaternary structure, monomer.

It is found in the cytoplasm. The catalysed reaction is (2R)-3-phosphoglycerate + ATP = (2R)-3-phospho-glyceroyl phosphate + ADP. The protein operates within carbohydrate degradation; glycolysis; pyruvate from D-glyceraldehyde 3-phosphate: step 2/5. This Chloroherpeton thalassium (strain ATCC 35110 / GB-78) protein is Phosphoglycerate kinase.